We begin with the raw amino-acid sequence, 229 residues long: Ribonuclease T (229 aa).

An Exonuclease domain is found at 23 to 197 (VIIDVETAGF…YDTERTAKLF (175 aa)). Mg(2+)-binding residues include Asp-26, Glu-28, His-184, and Asp-189. The active-site Proton donor/acceptor is the His-184.

This sequence belongs to the RNase T family. As to quaternary structure, homodimer. Requires Mg(2+) as cofactor.

Trims short 3' overhangs of a variety of RNA species, leaving a one or two nucleotide 3' overhang. Responsible for the end-turnover of tRNA: specifically removes the terminal AMP residue from uncharged tRNA (tRNA-C-C-A). Also appears to be involved in tRNA biosynthesis. The chain is Ribonuclease T from Haemophilus influenzae (strain 86-028NP).